The primary structure comprises 366 residues: DNA integrity scanning protein DisA (366 aa).

A DAC domain is found at 21 to 159 (VHTLKGTLQR…EGKAHMLEQP (139 aa)). Residues Gly88, Leu106, and 119-123 (TRHRS) contribute to the ATP site.

This sequence belongs to the DisA family. Homooctamer. It depends on Mg(2+) as a cofactor.

It carries out the reaction 2 ATP = 3',3'-c-di-AMP + 2 diphosphate. Participates in a DNA-damage check-point. DisA forms globular foci that rapidly scan along the chromosomes searching for lesions. In terms of biological role, also has diadenylate cyclase activity, catalyzing the condensation of 2 ATP molecules into cyclic di-AMP (c-di-AMP). c-di-AMP likely acts as a signaling molecule that may couple DNA integrity with a cellular process. The chain is DNA integrity scanning protein DisA from Corynebacterium glutamicum (strain R).